A 141-amino-acid chain; its full sequence is D-aminoacyl-tRNA deacylase (141 aa).

The Gly-cisPro motif, important for rejection of L-amino acids signature appears at 133–134 (GP).

Belongs to the DTD family. In terms of assembly, homodimer.

It is found in the cytoplasm. It catalyses the reaction glycyl-tRNA(Ala) + H2O = tRNA(Ala) + glycine + H(+). The enzyme catalyses a D-aminoacyl-tRNA + H2O = a tRNA + a D-alpha-amino acid + H(+). Its function is as follows. An aminoacyl-tRNA editing enzyme that deacylates mischarged D-aminoacyl-tRNAs. Also deacylates mischarged glycyl-tRNA(Ala), protecting cells against glycine mischarging by AlaRS. Acts via tRNA-based rather than protein-based catalysis; rejects L-amino acids rather than detecting D-amino acids in the active site. By recycling D-aminoacyl-tRNA to D-amino acids and free tRNA molecules, this enzyme counteracts the toxicity associated with the formation of D-aminoacyl-tRNA entities in vivo and helps enforce protein L-homochirality. This Thermobifida fusca (strain YX) protein is D-aminoacyl-tRNA deacylase.